The following is a 270-amino-acid chain: UPF0354 protein BA_4944/GBAA_4944/BAS4588 (270 aa).

The protein belongs to the UPF0354 family.

The sequence is that of UPF0354 protein BA_4944/GBAA_4944/BAS4588 from Bacillus anthracis.